Here is an 805-residue protein sequence, read N- to C-terminus: Leucine--tRNA ligase (805 aa).

Positions 40-51 (PYPSGSGLHVGH) match the 'HIGH' region motif. Residues 576–580 (KMSKS) carry the 'KMSKS' region motif. Lys-579 is an ATP binding site.

The protein belongs to the class-I aminoacyl-tRNA synthetase family.

It is found in the cytoplasm. It catalyses the reaction tRNA(Leu) + L-leucine + ATP = L-leucyl-tRNA(Leu) + AMP + diphosphate. This chain is Leucine--tRNA ligase, found in Chlorobium chlorochromatii (strain CaD3).